We begin with the raw amino-acid sequence, 685 residues long: Probable glucan endo-1,3-beta-glucosidase btgC (685 aa).

3 disordered regions span residues 1 to 96, 119 to 168, and 180 to 202; these read MSGP…NLGP, GIDA…RDSY, and PAGQ…SPYQ. Over 1-312 the chain is Cytoplasmic; it reads MSGPHRSFSF…PTPGGGSRKR (312 aa). Composition is skewed to polar residues over residues 47 to 61 and 73 to 90; these read SARS…SSGF and GQNS…TTPG. Residues 313–333 form a helical; Signal-anchor for type II membrane protein membrane-spanning segment; that stretch reads GWIVGLALAFIVVGAIVGGAV. The Extracellular portion of the chain corresponds to 334 to 685; sequence GGTLGNRENE…IPDCGGKTAA (352 aa). The tract at residues 335–369 is disordered; that stretch reads GTLGNRENEAPDTTKSASSDTESNGDLNKDSSEIK. The span at 345-360 shows a compositional bias: polar residues; that stretch reads PDTTKSASSDTESNGD. N-linked (GlcNAc...) asparagine glycans are attached at residues asparagine 405, asparagine 428, and asparagine 456. The active-site Proton donor is glutamate 488. The Nucleophile role is filled by glutamate 587. The N-linked (GlcNAc...) asparagine glycan is linked to asparagine 632.

It belongs to the glycosyl hydrolase 17 family.

The protein localises to the cell membrane. The enzyme catalyses Hydrolysis of (1-&gt;3)-beta-D-glucosidic linkages in (1-&gt;3)-beta-D-glucans.. Functionally, glucanases play a role in cell expansion during growth, in cell-cell fusion during mating, and in spore release during sporulation. This enzyme may be involved in beta-glucan degradation. Active on laminarin and lichenan. In Aspergillus oryzae (strain ATCC 42149 / RIB 40) (Yellow koji mold), this protein is Probable glucan endo-1,3-beta-glucosidase btgC (btgC).